The chain runs to 54 residues: Conotoxin vc5c (54 aa).

The first 14 residues, 1-14, serve as a signal peptide directing secretion; that stretch reads VILLLLIASIPSDA. Residues 15–43 constitute a propeptide that is removed on maturation; it reads VQLKTKDDMPLASFHGNARRTLQMLSNKR. Glu50 is subject to 4-carboxyglutamate. Trp51 is subject to 6'-bromotryptophan.

This sequence belongs to the conotoxin T superfamily. Post-translationally, contains 2 disulfide bonds that can be either 'C1-C3, C2-C4' or 'C1-C4, C2-C3', since these disulfide connectivities have been observed for conotoxins with cysteine framework V (for examples, see AC P0DQQ7 and AC P81755). In terms of tissue distribution, expressed by the venom duct.

Its subcellular location is the secreted. The chain is Conotoxin vc5c from Conus victoriae (Queen Victoria cone).